The primary structure comprises 416 residues: Adipocyte plasma membrane-associated protein (416 aa).

At 1–39 (MNEPEGLRFRRLNRPQIITDELQEPQYKGTSTYSGKVFR) the chain is on the cytoplasmic side. A helical transmembrane segment spans residues 40–60 (VILVTLGGCLILPLLVVFFLL). Topologically, residues 61-412 (ESPIHPELLS…FRSPYLCKLD (352 aa)) are extracellular. The N-linked (GlcNAc...) asparagine glycan is linked to N160.

Belongs to the strictosidine synthase family.

The protein resides in the membrane. In Salmo salar (Atlantic salmon), this protein is Adipocyte plasma membrane-associated protein (apmap).